Here is a 339-residue protein sequence, read N- to C-terminus: Trace amine-associated receptor 2 (339 aa).

At 1–36 the chain is on the extracellular side; sequence MTSFEAQQETFDCSEYGNGSCPENERSLGVRAAMYS. N-linked (GlcNAc...) asparagine glycosylation is present at Asn-18. Cystine bridges form between Cys-21-Cys-185 and Cys-104-Cys-189. The chain crosses the membrane as a helical span at residues 37–57; that stretch reads LMAGAIFITIFGNLVMIISIS. Residues 58–67 lie on the Cytoplasmic side of the membrane; it reads YFKQLHTPTN. Residues 68-88 form a helical membrane-spanning segment; it reads LLILSMAVTDFLLGFTIMPYS. Residues 89-106 are Extracellular-facing; that stretch reads MVRSVENCWYFGLTFCKI. The helical transmembrane segment at 107–127 threads the bilayer; sequence HYSFDLMLSITSIFHLCSVAI. At 128 to 150 the chain is on the cytoplasmic side; sequence DRFYAICHPLHYCTKMTIPVVKR. The chain crosses the membrane as a helical span at residues 151-171; that stretch reads LLLVCWSVPGAFAFGVVFSEA. The Extracellular portion of the chain corresponds to 172–195; sequence YADGIEGYDILVACSSSCPVMFNK. A helical transmembrane segment spans residues 196 to 216; it reads LWGTTLFVAGFFTPSSMMVGI. Residues 217-251 lie on the Cytoplasmic side of the membrane; that stretch reads YGKIFAVSKKHARVIDNLPENQNNQMRKDKKAAKT. A helical transmembrane segment spans residues 252 to 272; it reads LGIVMGVFLLCWFPCFFTILL. The Extracellular segment spans residues 273–287; sequence DPFLNFSTPAILFDA. The N-linked (GlcNAc...) asparagine glycan is linked to Asn-277. Residues 288–310 form a helical membrane-spanning segment; sequence LTWFGYFNSTCNPLIYGFFYPWF. Residues 311 to 339 are Cytoplasmic-facing; it reads RRALRYILLGKIFSSHFHNTNLFTQKETE.

It belongs to the G-protein coupled receptor 1 family.

The protein localises to the cell membrane. Orphan olfactory receptor specific for trace amines. Trace amine compounds are enriched in animal body fluids and act on trace amine-associated receptors (TAARs) to elicit both intraspecific and interspecific innate behaviors. Ligand-binding causes a conformation change that triggers signaling via the G(s)-class of G-proteins which activate adenylate cyclase. May also be required to provide olfactory input into limbic brain areas to regulate emotional behaviors likely via modulation of the dopamine system. This Rattus norvegicus (Rat) protein is Trace amine-associated receptor 2 (Taar2).